Here is a 174-residue protein sequence, read N- to C-terminus: Rubredoxin-2 (174 aa).

The Rubredoxin-like 1 domain occupies Met1–Ile53. Cys6, Cys9, Cys39, and Cys42 together coordinate Fe cation. The span at Gly56–Ala65 shows a compositional bias: low complexity. Residues Gly56 to Thr115 form a disordered region. The span at Ala97–Lys109 shows a compositional bias: basic residues. Residues Phe121–His172 form the Rubredoxin-like 2 domain. Residues Cys126, Cys129, Cys159, and Cys162 each coordinate Fe cation.

This sequence belongs to the rubredoxin family. Fe(3+) serves as cofactor.

It is found in the cytoplasm. It functions in the pathway hydrocarbon metabolism; alkane degradation. In terms of biological role, involved in the hydrocarbon hydroxylating system, which transfers electrons from NADH to rubredoxin reductase and then through rubredoxin to alkane 1 monooxygenase. The chain is Rubredoxin-2 (alkG) from Alcanivorax borkumensis (strain ATCC 700651 / DSM 11573 / NCIMB 13689 / SK2).